Consider the following 123-residue polypeptide: Putative iron-sulfur cluster insertion protein ErpA (123 aa).

Residues cysteine 51, cysteine 115, and cysteine 117 each coordinate iron-sulfur cluster.

Belongs to the HesB/IscA family. As to quaternary structure, homodimer. It depends on iron-sulfur cluster as a cofactor.

In terms of biological role, required for insertion of 4Fe-4S clusters. The polypeptide is Putative iron-sulfur cluster insertion protein ErpA (Burkholderia lata (strain ATCC 17760 / DSM 23089 / LMG 22485 / NCIMB 9086 / R18194 / 383)).